The sequence spans 316 residues: Probable cell division protein WhiA (316 aa).

The H-T-H motif DNA-binding region spans 276–309 (SLEELGKIAEPQITKDAIAGRIRRLLQLAEKTEK).

Belongs to the WhiA family.

Its function is as follows. Involved in cell division and chromosome segregation. The polypeptide is Probable cell division protein WhiA (Bifidobacterium longum subsp. infantis (strain ATCC 15697 / DSM 20088 / JCM 1222 / NCTC 11817 / S12)).